A 387-amino-acid polypeptide reads, in one-letter code: 3-ketoacyl-CoA thiolase (387 aa).

Cys91 functions as the Acyl-thioester intermediate in the catalytic mechanism. Catalysis depends on proton acceptor residues His343 and Cys373.

It belongs to the thiolase-like superfamily. Thiolase family. In terms of assembly, heterotetramer of two alpha chains (FadB) and two beta chains (FadA).

The protein localises to the cytoplasm. It catalyses the reaction an acyl-CoA + acetyl-CoA = a 3-oxoacyl-CoA + CoA. It participates in lipid metabolism; fatty acid beta-oxidation. In terms of biological role, catalyzes the final step of fatty acid oxidation in which acetyl-CoA is released and the CoA ester of a fatty acid two carbons shorter is formed. This is 3-ketoacyl-CoA thiolase from Escherichia fergusonii (strain ATCC 35469 / DSM 13698 / CCUG 18766 / IAM 14443 / JCM 21226 / LMG 7866 / NBRC 102419 / NCTC 12128 / CDC 0568-73).